The following is a 131-amino-acid chain: Type IV wide pilus major component PilA4 (131 aa).

The propeptide at methionine 1–glycine 6 is leader sequence. Residue phenylalanine 7 is modified to N-methylphenylalanine. Residues phenylalanine 7–isoleucine 27 form a helical membrane-spanning segment. Cysteine 95 and cysteine 130 are oxidised to a cystine.

Interacts with PilQ. Post-translationally, found in three forms of 14-kDa, 18-kDa and a glycosylated 23-kDa form. Both narrow and wide pili are glycosylated.

It is found in the cell inner membrane. The protein resides in the cell outer membrane. The protein localises to the periplasm. Functionally, plays an essential role in the assembly of two types of T4P pili: a wide and a narrow that participate in natural transformation and twitching motility. Major component of the wide pilus that is essential for natural transformation working as a DNA translocator structure that spans the inner and outer membranes. In addition, participates in the assembly of the narrow pilus composed of the PilA5 subunit that is required for twitching motility. In Thermus thermophilus (strain ATCC BAA-163 / DSM 7039 / HB27), this protein is Type IV wide pilus major component PilA4 (pilA4).